We begin with the raw amino-acid sequence, 56 residues long: UPF0434 protein Ecaj_0131 (56 aa).

This sequence belongs to the UPF0434 family.

This is UPF0434 protein Ecaj_0131 from Ehrlichia canis (strain Jake).